Reading from the N-terminus, the 317-residue chain is Ribose-phosphate pyrophosphokinase (317 aa).

Residues 41–43 (DME) and 100–101 (RQ) contribute to the ATP site. Residues His-134 and Asp-174 each coordinate Mg(2+). Lys-197 is a catalytic residue. Residues Arg-199, Asp-223, and 227–231 (DSGGT) each bind D-ribose 5-phosphate.

Belongs to the ribose-phosphate pyrophosphokinase family. Class I subfamily. In terms of assembly, homohexamer. Requires Mg(2+) as cofactor.

The protein localises to the cytoplasm. It carries out the reaction D-ribose 5-phosphate + ATP = 5-phospho-alpha-D-ribose 1-diphosphate + AMP + H(+). It participates in metabolic intermediate biosynthesis; 5-phospho-alpha-D-ribose 1-diphosphate biosynthesis; 5-phospho-alpha-D-ribose 1-diphosphate from D-ribose 5-phosphate (route I): step 1/1. Its function is as follows. Involved in the biosynthesis of the central metabolite phospho-alpha-D-ribosyl-1-pyrophosphate (PRPP) via the transfer of pyrophosphoryl group from ATP to 1-hydroxyl of ribose-5-phosphate (Rib-5-P). The polypeptide is Ribose-phosphate pyrophosphokinase (Bradyrhizobium diazoefficiens (strain JCM 10833 / BCRC 13528 / IAM 13628 / NBRC 14792 / USDA 110)).